The chain runs to 60 residues: Small ribosomal subunit protein bS21 (60 aa).

This sequence belongs to the bacterial ribosomal protein bS21 family.

The chain is Small ribosomal subunit protein bS21 (rpsU) from Mycoplasma pneumoniae (strain ATCC 29342 / M129 / Subtype 1) (Mycoplasmoides pneumoniae).